Here is a 1793-residue protein sequence, read N- to C-terminus: MESQQLSNYPHISHGSACASVTSKEVHTNQDPLDVSASKIQEYDKASTKANSQQTTTPASSAVPENLHHASPQPASVPPPQNGPYPQQCMMTQNQANPSGWSFYGHPSMIPYTPYQMSPMYFPPGPQSQFPQYPSSVGTPLSTPSPESGNTFTDSSSADSDMTSTKKYVRPPPMLTSPNDFPNWVKTYIKFLQNSNLGGIIPTVNGKPVPPMLTSPNDFPNWVKTYIKFLQNSNLGGIIPTVNGKPVRQITDDELTFLYNTFQIFAPSQFLPTWVKDILSVDYTDIMKILSKSIEKMQSDTQEANDIVTLANLQYNGSTPADAFETKVTNIIDRLNNNGIHINNKVACQLIMRGLSGEYKFLRYTRHRHLNMTVAELFLDIHAIYEEQQGSRNSKPNYRRNPSDEKNDSRSYTNTTKPKVIARNPQKTNNSKSKTARAHNVSTSNNSPSTDNDSISKSTTEPIQLNNKHDLHLGQKLTESTVNHTNHSDDELPGHLLLDSGASRTLIRSAHHIHSASSNPDINVVDAQKRNIPINAIGDLQFHFQDNTKTSIKVLHTPNIAYDLLSLNELAAVDITACFTKNVLERSDGTVLAPIVKYGDFYWVSKKYLLPSNISVPTINNVHTSESTRKYPYPFIHRMLAHANAQTIRYSLKNNTITYFNESDVDWSSAIDYQCPDCLIGKSTKHRHIKGSRLKYQNSYEPFQYLHTDIFGPVHNLPKSAPSYFISFTDETTKFRWVYPLHDRREDSILDVFTTILAFIKNQFQASVLVIQMDRGSEYTNRTLHKFLEKNGITPCYTTTADSRAHGVAERLNRTLLDDCRTQLQCSGLPNHLWFSAIEFSTIVRNSLASPKSKKSARQHAGLAGLDISTLLPFGQPVIVNDHNPNSKIHPRGIPGYALHPSRNSYGYIIYLPSLKKTVDTTNYVILQGKESRLDQFNYDALTFDEDLNRLTASYHSFIASNEIQQSNDLNIESDHDFQSDIELHPEQLRNVLSKAVSPTDSTPPSTHTEDSKRVSKTNIRAPREVDPNISESNILPSKKRSSTPQISDIESTGSGGMHRLDVPLLAPMSQSNTHESSHASKSKDFRHSDSYSDNETNHTNVPISSTGGTNNKTVPQTSEQETEKRIIHRSPSIDTSSSESNSLHHVVPIKTSDTCPKENTEESIIADLPLPDLPPEPPTELSDSFKELPPINSHQTNSSLGGIGDSNAYTTINSKKRSLEDNETEIKVSRDTWNTKNMRSLEPPRSKKRIHLIAAVKAVKSIKPIRTTLRYDEAITYNKDIKEKEKYIQAYHKEVNQLLMMKTWDTDRYYDRKEIDPKRVINSMFIFNRKRDGTHKARFVARGDIQHPDTYDPGMQSNTVHHYALMTSLSLALDNNYYITQLDISSAYLYADIKEELYIRPPPHLGMNDKLIRLKKSLYGLKQSGANWYETIKSYLIKQCGMEEVRGWSCVFKNSQVTICLFVDDMILFSKDLNANKKIITTLKKQYDTKIINLGESDNEIQYDILGLEIKYQRGKYMKLGMENSLTEKIPKLNVPLNPKGRKLSAPGQPGLYIDQDELEIDEDEYKEKVHEMQKLIGLASYVGYKFRFDLLYYINTLAQHILFPSRQVLDMTYELIQFMWDTRDKQLIWHKNKPTEPDNKLVAISDASYGNQPYYKSQIGNIYLLNGKVIGGKSTKASLTCTSTTEAEIHAISESVPLLNNLSHLVQELNKKPITKGLLTDSKSTISIIISNNEEKFRNRFFGTKAMRLRDEVSGNHLHVCYIETKKNIADVMTKPLPIKTFKLLTNKWIH.

Polar residues-rich tracts occupy residues 1-10 (MESQQLSNYP), 48-60 (TKANSQQTTTPAS), and 127-152 (QSQFPQYPSSVGTPLSTPSPESGNTF). 3 disordered regions span residues 1–84 (MESQ…QNGP), 126–174 (PQSQ…PPPM), and 390–459 (GSRN…SKST). The span at 153-165 (TDSSSADSDMTST) shows a compositional bias: low complexity. Residues 337–439 (NNGIHINNKV…NSKSKTARAH (103 aa)) form an RNA-binding region. A compositionally biased stretch (low complexity) spans 440–456 (NVSTSNNSPSTDNDSIS). The For protease activity; shared with dimeric partner role is filled by Asp-499. The tract at residues 621 to 678 (NVHTSESTRKYPYPFIHRMLAHANAQTIRYSLKNNTITYFNESDVDWSSAIDYQCPDC) is integrase-type zinc finger-like. Residues 698-873 (NSYEPFQYLH…AGLDISTLLP (176 aa)) enclose the Integrase catalytic domain. Mg(2+) is bound by residues Asp-709 and Asp-774. Residues 996-1208 (AVSPTDSTPP…SSLGGIGDSN (213 aa)) form a disordered region. The span at 998-1007 (SPTDSTPPST) shows a compositional bias: low complexity. Polar residues predominate over residues 1043–1053 (STPQISDIEST). Residues 1076-1091 (ESSHASKSKDFRHSDS) are compositionally biased toward basic and acidic residues. Composition is skewed to polar residues over residues 1092–1120 (YSDNETNHTNVPISSTGGTNNKTVPQTSE) and 1133–1144 (SIDTSSSESNSL). The Bipartite nuclear localization signal motif lies at 1216-1250 (KKRSLEDNETEIKVSRDTWNTKNMRSLEPPRSKKR). The Reverse transcriptase Ty1/copia-type domain maps to 1376 to 1514 (NNYYITQLDI…DILGLEIKYQ (139 aa)). Mg(2+)-binding residues include Asp-1384, Asp-1465, Asp-1466, Asp-1648, Glu-1690, and Asp-1723. In terms of domain architecture, RNase H Ty1/copia-type spans 1648-1790 (DASYGNQPYY…IKTFKLLTNK (143 aa)).

In terms of assembly, the capsid protein forms a homotrimer, from which the VLPs are assembled. The protease is a homodimer, whose active site consists of two apposed aspartic acid residues. In terms of processing, initially, virus-like particles (VLPs) are composed of the structural unprocessed proteins Gag and Gag-Pol, and also contain the host initiator methionine tRNA (tRNA(i)-Met) which serves as a primer for minus-strand DNA synthesis, and a dimer of genomic Ty RNA. Processing of the polyproteins occurs within the particle and proceeds by an ordered pathway, called maturation. First, the protease (PR) is released by autocatalytic cleavage of the Gag-Pol polyprotein yielding capsid protein p45 and a Pol-p154 precursor protein. This cleavage is a prerequisite for subsequent processing of Pol-p154 at the remaining sites to release the mature structural and catalytic proteins. Maturation takes place prior to the RT reaction and is required to produce transposition-competent VLPs.

It is found in the cytoplasm. It localises to the nucleus. It catalyses the reaction DNA(n) + a 2'-deoxyribonucleoside 5'-triphosphate = DNA(n+1) + diphosphate. It carries out the reaction Endonucleolytic cleavage to 5'-phosphomonoester.. In terms of biological role, capsid protein (CA) is the structural component of the virus-like particle (VLP), forming the shell that encapsulates the retrotransposons dimeric RNA genome. The particles are assembled from trimer-clustered units and there are holes in the capsid shells that allow for the diffusion of macromolecules. CA also has nucleocapsid-like chaperone activity, promoting primer tRNA(i)-Met annealing to the multipartite primer-binding site (PBS), dimerization of Ty1 RNA and initiation of reverse transcription. Its function is as follows. The aspartyl protease (PR) mediates the proteolytic cleavages of the Gag and Gag-Pol polyproteins after assembly of the VLP. Reverse transcriptase/ribonuclease H (RT) is a multifunctional enzyme that catalyzes the conversion of the retro-elements RNA genome into dsDNA within the VLP. The enzyme displays a DNA polymerase activity that can copy either DNA or RNA templates, and a ribonuclease H (RNase H) activity that cleaves the RNA strand of RNA-DNA heteroduplexes during plus-strand synthesis and hydrolyzes RNA primers. The conversion leads to a linear dsDNA copy of the retrotransposon that includes long terminal repeats (LTRs) at both ends. Functionally, integrase (IN) targets the VLP to the nucleus, where a subparticle preintegration complex (PIC) containing at least integrase and the newly synthesized dsDNA copy of the retrotransposon must transit the nuclear membrane. Once in the nucleus, integrase performs the integration of the dsDNA into the host genome. The sequence is that of Transposon Ty1-H Gag-Pol polyprotein (TY1B-H) from Saccharomyces cerevisiae (strain ATCC 204508 / S288c) (Baker's yeast).